A 203-amino-acid polypeptide reads, in one-letter code: Small ribosomal subunit protein uS7 (203 aa).

Residues 1–21 form a disordered region; that stretch reads MSSEAPEPDAPASTDDERVSA.

This sequence belongs to the universal ribosomal protein uS7 family. As to quaternary structure, part of the 30S ribosomal subunit.

In terms of biological role, one of the primary rRNA binding proteins, it binds directly to 16S rRNA where it nucleates assembly of the head domain of the 30S subunit. Is located at the subunit interface close to the decoding center. The chain is Small ribosomal subunit protein uS7 from Natronomonas pharaonis (strain ATCC 35678 / DSM 2160 / CIP 103997 / JCM 8858 / NBRC 14720 / NCIMB 2260 / Gabara) (Halobacterium pharaonis).